The following is a 76-amino-acid chain: Theta defensin subunit C (76 aa).

The N-terminal stretch at 1–22 (MRTFAFLTAMLLLVALHAQAEA) is a signal peptide. Positions 23–64 (RQARADEAAIQEQPGADDQGMAHSFTRNESAVLPLSESERGL) are excised as a propeptide. Arginine 65 participates in a covalent cross-link: Cyclopeptide (Arg-Cys) (interchain with C-73 in subunit A); in form BTD-4. A disulfide bond links cysteine 68 and cysteine 73. A Cyclopeptide (Cys-Arg) (interchain with R-65 in subunit A); in form BTD-4 cross-link involves residue cysteine 73. Residues 74–76 (RLL) constitute a propeptide that is removed on maturation.

This sequence belongs to the alpha-defensin family. Theta subfamily. In terms of assembly, BTD-4 is a cyclic heterodimer composed of subunits A and C; disulfide-linked. Post-translationally, forms a cyclic peptide with subunit A (BTD-4). An additional intersubunit disulfide bond is formed.

Its function is as follows. BTD-4 has antimicrobial activity against the Gram-negative bacterium E.coli ML35, the Gram-positive bacterium S.aureus 502a, and the fungus C.albicans 16820. This chain is Theta defensin subunit C (BTDC), found in Papio anubis (Olive baboon).